The following is a 177-amino-acid chain: ATP synthase subunit delta (177 aa).

This sequence belongs to the ATPase delta chain family. In terms of assembly, F-type ATPases have 2 components, F(1) - the catalytic core - and F(0) - the membrane proton channel. F(1) has five subunits: alpha(3), beta(3), gamma(1), delta(1), epsilon(1). F(0) has three main subunits: a(1), b(2) and c(10-14). The alpha and beta chains form an alternating ring which encloses part of the gamma chain. F(1) is attached to F(0) by a central stalk formed by the gamma and epsilon chains, while a peripheral stalk is formed by the delta and b chains.

The protein localises to the cell inner membrane. Functionally, f(1)F(0) ATP synthase produces ATP from ADP in the presence of a proton or sodium gradient. F-type ATPases consist of two structural domains, F(1) containing the extramembraneous catalytic core and F(0) containing the membrane proton channel, linked together by a central stalk and a peripheral stalk. During catalysis, ATP synthesis in the catalytic domain of F(1) is coupled via a rotary mechanism of the central stalk subunits to proton translocation. This protein is part of the stalk that links CF(0) to CF(1). It either transmits conformational changes from CF(0) to CF(1) or is implicated in proton conduction. This is ATP synthase subunit delta from Enterobacter sp. (strain 638).